The chain runs to 62 residues: Protein DsrB (62 aa).

Belongs to the DsrB family.

The sequence is that of Protein DsrB from Citrobacter koseri (strain ATCC BAA-895 / CDC 4225-83 / SGSC4696).